The primary structure comprises 128 residues: Glycine cleavage system H protein (128 aa).

Positions 22–104 constitute a Lipoyl-binding domain; that stretch reads TVLVGITDYA…YGEGWIFRLK (83 aa). The residue at position 63 (Lys-63) is an N6-lipoyllysine.

This sequence belongs to the GcvH family. The glycine cleavage system is composed of four proteins: P, T, L and H. Monomer. The cofactor is (R)-lipoate.

Functionally, the glycine cleavage system catalyzes the degradation of glycine. The H protein shuttles the methylamine group of glycine from the P protein to the T protein. This is Glycine cleavage system H protein from Thermus thermophilus (strain ATCC 27634 / DSM 579 / HB8).